The following is a 326-amino-acid chain: Vacuolar protein sorting-associated protein 26A-A (326 aa).

The interval 306-326 (TNFHQRFEPQEPQASAEEPEI) is disordered. A compositionally biased stretch (low complexity) spans 315 to 326 (QEPQASAEEPEI).

The protein belongs to the VPS26 family. In terms of assembly, component of the heterotrimeric retromer cargo-selective complex (CSC) which is believed to associate with variable sorting nexins to form functionally distinct retromer complex variants.

The protein localises to the cytoplasm. The protein resides in the endosome membrane. Its subcellular location is the early endosome. Its function is as follows. Acts as a component of the retromer cargo-selective complex (CSC). The CSC is believed to be the core functional component of retromer or respective retromer complex variants acting to prevent missorting of selected transmembrane cargo proteins into the lysosomal degradation pathway. Retromer mediates retrograde transport of cargo proteins from endosomes to the trans-Golgi network (TGN). The chain is Vacuolar protein sorting-associated protein 26A-A (vps26a-a) from Xenopus laevis (African clawed frog).